A 415-amino-acid polypeptide reads, in one-letter code: Esterase FrsA (415 aa).

It belongs to the FrsA family. Monomer in solution. Homodimer. Forms a 1:1 complex with the unphosphorylated form of the EIIA component of the glucose-specific PTS system (IIAGlc).

It carries out the reaction a carboxylic ester + H2O = an alcohol + a carboxylate + H(+). Functionally, catalyzes the hydrolysis of esters. In vitro, prefers short chain alkanoate ester as substrate. Displays highest activity towards p-nitrophenyl acetate (pNPA). Has weaker activity towards p-nitrophenyl butyrate (pNPB). This Vibrio vulnificus (strain CMCP6) protein is Esterase FrsA.